A 207-amino-acid polypeptide reads, in one-letter code: MARYIGPKAKLSRREGTDLFLKSARRSLADKCKLDSKPGQHGRISGARTSDYGTQLREKQKVKRIYGVLERQFRRYFAEADRRKGNTGETLLQLLESRLDNVVYRMGFGSTRAEARQLVSHKAVTVNGIVANIPSQQVKAGDVVAIREKAKKQARIVEALSLAEQGGMPSWVAVDAKKFEGTFKQVPERADIAGDINESLIVELYSR.

An S4 RNA-binding domain is found at 97-160 (SRLDNVVYRM…KKQARIVEAL (64 aa)).

This sequence belongs to the universal ribosomal protein uS4 family. Part of the 30S ribosomal subunit. Contacts protein S5. The interaction surface between S4 and S5 is involved in control of translational fidelity.

Functionally, one of the primary rRNA binding proteins, it binds directly to 16S rRNA where it nucleates assembly of the body of the 30S subunit. In terms of biological role, with S5 and S12 plays an important role in translational accuracy. In Burkholderia pseudomallei (strain 1106a), this protein is Small ribosomal subunit protein uS4.